The primary structure comprises 217 residues: MSKGRAEAAAGAAGILLRYLQEQNRPYSSQDVFGNLQREHGLGKAVVVKTLEQLAQQGKIKEKMYGKQKIYFADQDQFDMVSDADLQVLDGKIVALTAKVQSLQQSCRYMEAELKELSSALTTPEMQKEIQELKKECAGYRERLKNIKAATNHVTPEEKEQVYRERQKYCKEWRKRKRMATELSDAILEGYPKSKKQFFEEVGIETDEDYNVTLPDP.

A coiled-coil region spans residues 93–153 (IVALTAKVQS…LKNIKAATNH (61 aa)). The segment at 118–182 (SSALTTPEMQ…WRKRKRMATE (65 aa)) is DNA-binding.

Belongs to the HOP2 family. Interacts with the DNA-binding domain of the nuclear receptors NR3C1/GR, ESR2/ER-beta, THRB and RXRA. Forms a stable heterodimer with MND1. Interacts with PSMC3/TBP1. Post-translationally, PTM: Phosphorylated by PKA, PKC and MAPK. As to expression, highly expressed in testis and colon.

The protein localises to the nucleus. Its function is as follows. Plays an important role in meiotic recombination. Stimulates DMC1-mediated strand exchange required for pairing homologous chromosomes during meiosis. The complex PSMC3IP/MND1 binds DNA, stimulates the recombinase activity of DMC1 as well as DMC1 D-loop formation from double-strand DNA. This complex stabilizes presynaptic RAD51 and DMC1 filaments formed on single strand DNA to capture double-strand DNA. This complex stimulates both synaptic and presynaptic critical steps in RAD51 and DMC1-promoted homologous pairing. May inhibit HIV-1 viral protein TAT activity and modulate the activity of proteasomes through association with PSMC3. Acts as a tissue specific coactivator of hormone-dependent transcription mediated by nuclear receptors. This is Homologous-pairing protein 2 homolog (PSMC3IP) from Homo sapiens (Human).